A 363-amino-acid chain; its full sequence is Glutamate--cysteine ligase (363 aa).

The protein belongs to the glutamate--cysteine ligase type 2 family. YbdK subfamily.

The enzyme catalyses L-cysteine + L-glutamate + ATP = gamma-L-glutamyl-L-cysteine + ADP + phosphate + H(+). In terms of biological role, catalyzes the synthesis of gamma-glutamylcysteine (gamma-GC), the main low-molecular-weight thiol compound instead of glutathione in halophilic archaea. In Haloquadratum walsbyi (strain DSM 16790 / HBSQ001), this protein is Glutamate--cysteine ligase.